We begin with the raw amino-acid sequence, 224 residues long: Rhodanese-like domain-containing protein 14, chloroplastic (224 aa).

Residues 1 to 48 (MASLTSIATPYPSSSQALRLKSSGNTLFSAGVRSAAMVSGHKTLKIQC) constitute a chloroplast transit peptide. A Rhodanese domain is found at 87–220 (KENNFVILDV…WGKEGLPVET (134 aa)). The Cysteine persulfide intermediate role is filled by cysteine 166.

The protein localises to the plastid. It is found in the chloroplast. The protein is Rhodanese-like domain-containing protein 14, chloroplastic of Arabidopsis thaliana (Mouse-ear cress).